We begin with the raw amino-acid sequence, 415 residues long: 3-oxoacyl-[acyl-carrier-protein] synthase 2 (415 aa).

The Ketosynthase family 3 (KS3) domain occupies 3–412 (KRRVVVTGMG…GTNGSLVFKK (410 aa)). Catalysis depends on for beta-ketoacyl synthase activity residues cysteine 164, histidine 304, and histidine 342.

The protein belongs to the thiolase-like superfamily. Beta-ketoacyl-ACP synthases family. As to quaternary structure, homodimer.

It catalyses the reaction a fatty acyl-[ACP] + malonyl-[ACP] + H(+) = a 3-oxoacyl-[ACP] + holo-[ACP] + CO2. The enzyme catalyses (9Z)-hexadecenoyl-[ACP] + malonyl-[ACP] + H(+) = 3-oxo-(11Z)-octadecenoyl-[ACP] + holo-[ACP] + CO2. Its pathway is lipid metabolism; fatty acid biosynthesis. In terms of biological role, involved in the type II fatty acid elongation cycle. Catalyzes the elongation of a wide range of acyl-ACP by the addition of two carbons from malonyl-ACP to an acyl acceptor. Can efficiently catalyze the conversion of palmitoleoyl-ACP (cis-hexadec-9-enoyl-ACP) to cis-vaccenoyl-ACP (cis-octadec-11-enoyl-ACP), an essential step in the thermal regulation of fatty acid composition. This is 3-oxoacyl-[acyl-carrier-protein] synthase 2 (fabF) from Vibrio harveyi (Beneckea harveyi).